The primary structure comprises 5537 residues: Histone-lysine N-methyltransferase 2D (5537 aa).

The interval 1-60 (MDSQKLAGEDKDSEPAADGPAASEDPSATESDLPNPHVGEVSVLSSGSPRLQETPQDCSG) is disordered. Residue serine 27 is modified to Phosphoserine. A compositionally biased stretch (polar residues) spans 43-57 (VLSSGSPRLQETPQD). Residues 104 to 149 (GPNEAVLPSEDLSQIGFPEGLTPAHLGEPGGSCWAHHWCAAWSAGV) form a C2HC pre-PHD-type 1; degenerate zinc finger. 3 consecutive PHD-type zinc fingers follow at residues 170–218 (QRCS…PEHS), 226–276 (EARC…CKVC), and 273–323 (CKVC…CRVC). Residues 229-274 (CAVCEGPGELCDLFFCTSCGHHYHGACLDTALTARKRAGWQCPECK) form an RING-type 1; atypical zinc finger. An RING-type 2; degenerate zinc finger spans residues 276–321 (CQACRKPGNDSKMLVCETCDKGYHTFCLKPPMEELPAHSWKCKACR). 4 disordered regions span residues 368–387 (VCSR…EPDA), 393–416 (QGQP…QCEA), 436–1331 (EEMP…RLKS), and 1340–1359 (VVAD…DDDT). The segment at 439-668 (PLLPPPEESP…VSRLSPPPEE (230 aa)) is 15 X 5 AA repeats of S/P-P-P-E/P-E/A. The span at 440 to 473 (LLPPPEESPLSPPPEESPTSPPPEASRLSPPPEE) shows a compositional bias: pro residues. 3 repeat units span residues 442–446 (PPPEE), 460–464 (PPPEA), and 469–473 (PPPEE). The segment covering 474–483 (LPASPLPEAL) has biased composition (low complexity). Residues 494 to 509 (LSPPPEESPLSPPPES) show a composition bias toward pro residues. 2 tandem repeats follow at residues 496 to 500 (PPPEE) and 504 to 508 (SPPPE). Residues 510 to 519 (SPFSPLEESP) are compositionally biased toward low complexity. Pro residues-rich tracts occupy residues 520–547 (LSPP…PLSP) and 554–595 (LSPP…PPPE). 5 consecutive repeat copies span residues 521–525 (SPPEE), 555–559 (SPPPE), 564–568 (SPPPE), 573–577 (SPPPE), and 582–586 (SPPPE). The segment covering 596-607 (ASRLFPPFEESP) has biased composition (low complexity). Residues 608–649 (LSPPPEESPLSPPPEASRLSPPPEDSPMSPPPEESPMSPPPE) are compositionally biased toward pro residues. 4 consecutive repeat copies span residues 609-613 (SPPPE), 618-622 (SPPPE), 627-631 (SPPPE), and 645-649 (SPPPE). Positions 650-662 (VSRLSPLPVVSRL) are enriched in low complexity. Copy 15 of the repeat occupies 663 to 667 (SPPPE). Positions 663-712 (SPPPEESPLSPPPEESPTSPPPEASRLSPPPEDSPTSPPPEDSPASPPPE) are enriched in pro residues. Low complexity predominate over residues 713 to 725 (DSLMSLPLEESPL). At serine 744 the chain carries Phosphoserine. 2 stretches are compositionally biased toward basic and acidic residues: residues 745-760 (PRPE…EEPH) and 845-869 (RPEE…KPPE). 2 stretches are compositionally biased toward low complexity: residues 889 to 903 (PSLS…LSEP) and 911 to 928 (LPEE…LSPQ). The segment covering 929–940 (LMPPDPLPPPLS) has biased composition (pro residues). A compositionally biased stretch (low complexity) spans 941–954 (PIITAAAPPALSPL). Over residues 994 to 1008 (EPVPPMILPPSPGSP) the composition is skewed to pro residues. Positions 1048–1057 (PLSVPSPLSP) are enriched in low complexity. Residues 1068–1080 (AELHEMETEKVSE) are compositionally biased toward basic and acidic residues. Position 1151 is a phosphoserine (serine 1151). Phosphothreonine is present on threonine 1195. Residues 1207 to 1216 (EISNLSQGDA) show a composition bias toward polar residues. A Phosphoserine modification is found at serine 1249. The residue at position 1267 (threonine 1267) is a Phosphothreonine. Serine 1270 is subject to Phosphoserine. 2 stretches are compositionally biased toward basic residues: residues 1289–1302 (GRRR…RIKQ) and 1310–1329 (GRRR…RARL). 3 PHD-type zinc fingers span residues 1377–1430 (QDMC…CIVC), 1427–1477 (CIVC…CVSC), and 1504–1559 (LVTC…CQPY). The RING-type 3; atypical zinc finger occupies 1507-1557 (CPICHAPYVEEDLLIQCRHCERWMHAGCESLFTEDDVEQAADEGFDCVSCQ). Phosphoserine is present on serine 1606. Disordered stretches follow at residues 1610 to 1767 (KRRQ…LEDM), 1793 to 1889 (GVGR…MESK), 1904 to 2002 (EQHL…NQRS), and 2165 to 2683 (PQVP…QRQR). The span at 1637 to 1666 (PDDKKDGDLDTDELLKGEGGVEHMECEIKL) shows a compositional bias: basic and acidic residues. Position 1671 is a phosphoserine (serine 1671). Positions 1675 to 1685 (EPGKEETEESK) are enriched in basic and acidic residues. Composition is skewed to basic residues over residues 1702–1712 (RQRKSHTRTKK) and 1753–1762 (KQQRRGRKKS). 2 stretches are compositionally biased toward basic and acidic residues: residues 1806–1825 (AKGD…KGDD) and 1832–1841 (EESRGLEGKA). Phosphoserine is present on residues serine 1820 and serine 1834. Phosphothreonine is present on residues threonine 1843 and threonine 1865. Basic and acidic residues predominate over residues 1874–1889 (DLDRISTEELPKMESK). Positions 1979–1990 (TTPSTPTTPTTE) are enriched in low complexity. Pro residues predominate over residues 2190–2209 (PTAPPTYPPYPSPTGAPAQP). Serine 2239 bears the Phosphoserine mark. Threonine 2240 is subject to Phosphothreonine. At lysine 2246 the chain carries N6-acetyllysine. Phosphoserine is present on residues serine 2260 and serine 2274. Residues 2280 to 2292 (ESRKALEVKKEEL) show a composition bias toward basic and acidic residues. A phosphoserine mark is found at serine 2309, serine 2311, and serine 2342. 2 stretches are compositionally biased toward pro residues: residues 2350–2365 (QEPP…PPSH) and 2379–2393 (AQPP…PPPE). Composition is skewed to low complexity over residues 2409–2431 (SRVP…RPLS) and 2494–2505 (FPAALPAGPAGE). Arginine 2535 is subject to Asymmetric dimethylarginine. A compositionally biased stretch (pro residues) spans 2547–2560 (LKPPVPQPGLPPPH). Polar residues predominate over residues 2574–2584 (KPQSTNYTVAT). Low complexity predominate over residues 2589–2609 (PSGSPLGPSSGSTGESYGLSP). The segment covering 2610–2621 (LRPPSVLPPPAP) has biased composition (pro residues). The residue at position 2640 (serine 2640) is a Phosphoserine. Residues 2669–2707 (MSGLSQTELEKQRQRQRLRELLIRQQIQRNTLRQEKETA) are a coiled coil. The LXXLL motif 1 motif lies at 2686–2690 (LRELL). Disordered regions lie at residues 2697–2814 (RNTL…QQQQ) and 2835–2996 (ARFP…LDDD). The segment covering 2707-2722 (AAAAAGAVGPPGSWGA) has biased composition (low complexity). 2 stretches are compositionally biased toward polar residues: residues 2733-2746 (SRGQ…QDKS) and 2781-2790 (PSSMDVNSRQ). Arginine 2836 carries the post-translational modification Asymmetric dimethylarginine. Over residues 2931–2940 (PQKPSAPPAP) the composition is skewed to pro residues. The LXXLL motif 2 signature appears at 3038 to 3042 (LDDLL). The disordered stretch occupies residues 3078-3110 (EKAEREALLRGVEPGPLGPEERPPPAADASEPR). N6-acetyllysine is present on lysine 3079. The residue at position 3130 (serine 3130) is a Phosphoserine. Disordered stretches follow at residues 3147–3209 (ANSL…GSSL) and 3263–3339 (KQQL…AHAL). Threonine 3197 is subject to Phosphothreonine. Composition is skewed to low complexity over residues 3198 to 3209 (PSPLSGPGGSSL), 3263 to 3289 (KQQL…LSAP), and 3301 to 3320 (GSSP…LAGA). Residue serine 3199 is modified to Phosphoserine. Residues 3249-3282 (IEDLLEHEKKELQKKQQLSAQLQPAQQQQQQQQQ) adopt a coiled-coil conformation. Residues 3325–3334 (LPQPLMPTQP) are compositionally biased toward pro residues. An N6-acetyllysine modification is found at lysine 3433. Disordered regions lie at residues 3462–3499 (LSGG…TFAQ) and 3596–3673 (RNKQ…GPFL). A coiled-coil region spans residues 3562 to 3614 (EKLKLVTEQQSKIQKQLDQVRKQQKEHTNLMAEYRNKQQQQQQQQQQQQQQHS). 2 stretches are compositionally biased toward low complexity: residues 3599–3612 (QQQQ…QQQQ) and 3631–3643 (LPGQ…GLQP). A coiled-coil region spans residues 3714 to 3750 (RLLQERQLQLQQQRMQLAQKLQQQQQQQQQQQHLLGQ). Residue arginine 3727 is modified to Asymmetric dimethylarginine. Residues 3758 to 3802 (QQGPGVQTNQALGPKPQGLMPPSSHQGLLVQQLSPQPPQGPQGML) form a disordered region. A coiled-coil region spans residues 3897–3975 (LQQLQQQQQL…FQQQQQQQQM (79 aa)). The tract at residues 3984–4191 (LLSPQQQQQQ…GQGLPGVGIM (208 aa)) is disordered. Over residues 4012–4023 (PGALGPTLLLTG) the composition is skewed to low complexity. The segment covering 4024 to 4045 (KEQNTVDPAVSSEATEGPSTHQ) has biased composition (polar residues). Over residues 4073 to 4108 (SQLLLVQPQPQPQPSSLQLQPPLRLPGQQQQQVSLL) the composition is skewed to low complexity. The span at 4111-4120 (AGGGSHGQLG) shows a compositional bias: gly residues. Residues 4137-4154 (PSVSLGDQPGSMTQNLLG) show a composition bias toward polar residues. Arginine 4198 carries the post-translational modification Asymmetric dimethylarginine. At serine 4215 the chain carries Phosphoserine. An LXXLL motif 3 motif is present at residues 4222 to 4226 (LQALL). 2 disordered regions span residues 4233 to 4398 (QSQA…VPGH) and 4410 to 4452 (ASQL…LLLA). Residues 4237 to 4251 (VRQTPPYQEPGTQTS) show a composition bias toward polar residues. Positions 4252-4282 (PLQGLLGCQPQLGGFPGPQTGPLQELGAGPR) are enriched in low complexity. Residues 4253 to 4257 (LQGLL) carry the LXXLL motif 4 motif. The span at 4283-4293 (PQGPPRLPAPP) shows a compositional bias: pro residues. Composition is skewed to low complexity over residues 4294 to 4305 (GALSTGPVLGPV) and 4320 to 4331 (PSQLPSPSSQLP). Positions 4338–4357 (PTHPGTPKPQGPTLEPPPGR) are enriched in pro residues. The residue at position 4359 (serine 4359) is a Phosphoserine. The LXXLL motif 5 motif lies at 4463 to 4467 (LQKLL). Lysine 4465 carries the N6-acetyllysine modification. Disordered regions lie at residues 4503 to 4544 (QGTP…KEDG) and 4613 to 4727 (KNNL…HLGS). Residues 4619–4633 (PPTPPSSLPPTPPPS) are compositionally biased toward pro residues. Positions 4648–4673 (LGEHPKDAASARDSERALRDTSEVKS) are enriched in basic and acidic residues. Serine 4738 is modified (phosphoserine). A Glycyl lysine isopeptide (Lys-Gly) (interchain with G-Cter in SUMO2) cross-link involves residue lysine 4756. Lysine 4776 is modified (N6-acetyllysine). Phosphoserine occurs at positions 4822 and 4849. The segment at 4822–4857 (SPARAGTEPKKGEAEGPGGKEKGLEGKSPDTGPDWL) is disordered. The span at 4828-4849 (TEPKKGEAEGPGGKEKGLEGKS) shows a compositional bias: basic and acidic residues. Lysine 4880 is covalently cross-linked (Glycyl lysine isopeptide (Lys-Gly) (interchain with G-Cter in SUMO2)). The tract at residues 4905–4980 (QLSAPPPEEP…GEDSRPPRLK (76 aa)) is disordered. Residues 4908–4931 (APPPEEPSPPPSPLAPSPASPPTE) show a composition bias toward pro residues. Over residues 4932–4941 (PLVELPTEPL) the composition is skewed to low complexity. Basic and acidic residues predominate over residues 4966–4976 (RPPEEGEDSRP). Positions 4990-4994 (LRLLL) match the LXXLL motif 6 motif. The C2HC pre-PHD-type 2 zinc finger occupies 5029 to 5069 (MRRCCFCHEEGDGATDGPARLLNLDLDLWVHLNCALWSTEV). Residues 5090–5137 (TKCSLCQRTGATSSCNRMRCPNVYHFACAIRAKCMFFKDKTMLCPMHK) form a PHD-type 7 zinc finger. An FYR N-terminal domain is found at 5175–5235 (LHMFRVGGLV…CCYRCSIGEN (61 aa)). Residues 5236–5321 (NGRPEFVIKV…ESCQNYLFRY (86 aa)) enclose the FYR C-terminal domain. The WDR5 interaction motif (WIN) motif lies at 5337–5342 (GCARSE). The SET domain maps to 5397–5513 (NNVYLARSRI…KGEELTYDYQ (117 aa)). Residues tyrosine 5451 and 5474 to 5475 (NH) each bind S-adenosyl-L-methionine. Residues cysteine 5477, cysteine 5525, cysteine 5527, and cysteine 5532 each coordinate Zn(2+). One can recognise a Post-SET domain in the interval 5521–5537 (HKIPCHCGAWNCRKWMN).

This sequence belongs to the class V-like SAM-binding methyltransferase superfamily. Histone-lysine methyltransferase family. TRX/MLL subfamily. Component of the MLL2 complex (also named ASCOM complex), at least composed of catalytic subunit KMT2D/MLL2, ASH2L, RBBP5, WDR5, NCOA6, DPY30, KDM6A, PAXIP1/PTIP, PAGR1 and alpha- and beta-tubulin. Forms a core complex with the evolutionary conserved subcomplex WRAD composed of WDR5, RBBP5, ASH2L/ASH2 and DPY30 subunits; WRAD differentially stimulates the methyltransferase activity. Interacts with ESR1; interaction is direct. Interacts (via WIN motif) with WDR5. Expressed in most adult tissues, including a variety of hematoipoietic cells, with the exception of the liver.

It is found in the nucleus. It catalyses the reaction L-lysyl(4)-[histone H3] + S-adenosyl-L-methionine = N(6)-methyl-L-lysyl(4)-[histone H3] + S-adenosyl-L-homocysteine + H(+). Histone methyltransferase that catalyzes methyl group transfer from S-adenosyl-L-methionine to the epsilon-amino group of 'Lys-4' of histone H3 (H3K4). Part of chromatin remodeling machinery predominantly forms H3K4me1 methylation marks at active chromatin sites where transcription and DNA repair take place. Acts as a coactivator for estrogen receptor by being recruited by ESR1, thereby activating transcription. This chain is Histone-lysine N-methyltransferase 2D (KMT2D), found in Homo sapiens (Human).